Reading from the N-terminus, the 447-residue chain is Serine--tRNA ligase (447 aa).

Position 245–247 (245–247) interacts with L-serine; it reads TAE. ATP contacts are provided by residues 276–278 and valine 292; that span reads RKE. Glutamate 299 lines the L-serine pocket. Residue 363 to 366 coordinates ATP; it reads ELAS. Threonine 398 is an L-serine binding site.

This sequence belongs to the class-II aminoacyl-tRNA synthetase family. Type-1 seryl-tRNA synthetase subfamily. In terms of assembly, homodimer. The tRNA molecule binds across the dimer.

It localises to the cytoplasm. The enzyme catalyses tRNA(Ser) + L-serine + ATP = L-seryl-tRNA(Ser) + AMP + diphosphate + H(+). It catalyses the reaction tRNA(Sec) + L-serine + ATP = L-seryl-tRNA(Sec) + AMP + diphosphate + H(+). Its pathway is aminoacyl-tRNA biosynthesis; selenocysteinyl-tRNA(Sec) biosynthesis; L-seryl-tRNA(Sec) from L-serine and tRNA(Sec): step 1/1. In terms of biological role, catalyzes the attachment of serine to tRNA(Ser). Is also able to aminoacylate tRNA(Sec) with serine, to form the misacylated tRNA L-seryl-tRNA(Sec), which will be further converted into selenocysteinyl-tRNA(Sec). The sequence is that of Serine--tRNA ligase from Pyrobaculum neutrophilum (strain DSM 2338 / JCM 9278 / NBRC 100436 / V24Sta) (Thermoproteus neutrophilus).